Consider the following 420-residue polypeptide: UDP-N-acetylglucosamine 1-carboxyvinyltransferase (420 aa).

Residue 22-23 (KN) participates in phosphoenolpyruvate binding. Residue R93 coordinates UDP-N-acetyl-alpha-D-glucosamine. C117 serves as the catalytic Proton donor. The residue at position 117 (C117) is a 2-(S-cysteinyl)pyruvic acid O-phosphothioketal. UDP-N-acetyl-alpha-D-glucosamine-binding residues include D306 and I328.

Belongs to the EPSP synthase family. MurA subfamily.

The protein resides in the cytoplasm. The enzyme catalyses phosphoenolpyruvate + UDP-N-acetyl-alpha-D-glucosamine = UDP-N-acetyl-3-O-(1-carboxyvinyl)-alpha-D-glucosamine + phosphate. Its pathway is cell wall biogenesis; peptidoglycan biosynthesis. Functionally, cell wall formation. Adds enolpyruvyl to UDP-N-acetylglucosamine. This chain is UDP-N-acetylglucosamine 1-carboxyvinyltransferase, found in Colwellia psychrerythraea (strain 34H / ATCC BAA-681) (Vibrio psychroerythus).